A 413-amino-acid chain; its full sequence is Mitochondrial inner membrane magnesium transporter MFM1 (413 aa).

The N-terminal 35 residues, 1-35 (MRAFPRVLPFRHQRSYNNILLRTVRLFGSSLSSFD), are a transit peptide targeting the mitochondrion. Asn-202 carries an N-linked (GlcNAc...) asparagine glycan. A helical membrane pass occupies residues 329–349 (LMLLGIRYAIGMLSLGGALFL). Positions 353-356 (YGMN) match the YGMN motif. A helical membrane pass occupies residues 367 to 387 (AYLTVTILGLISTVWLYAKGI).

The protein belongs to the CorA metal ion transporter (MIT) (TC 1.A.35) family. Forms homooligomers. Interacts with MRS2. N-glycosylated. Glycosylation is important for correct localization of the protein.

It is found in the mitochondrion inner membrane. Functionally, mitochondrial inner membrane magnesium transporter required for mitochondrial magnesium homeostasis. Modulates the conductance of the MRS2 channel. Involved in the splicing of mRNA group II introns in mitochondria by affecting mitochondrial magnesium concentrations, which are critical for group II intron splicing. In Saccharomyces cerevisiae (strain ATCC 204508 / S288c) (Baker's yeast), this protein is Mitochondrial inner membrane magnesium transporter MFM1 (MFM1).